A 338-amino-acid polypeptide reads, in one-letter code: Ketol-acid reductoisomerase (NADP(+)) (338 aa).

The KARI N-terminal Rossmann domain maps to 1–181 (MKVFYDKDAD…GGGRAGIIET (181 aa)). NADP(+)-binding positions include 24-27 (YGSQ), Arg-47, and Ser-52. Residue His-107 is part of the active site. NADP(+) is bound at residue Gly-133. Positions 182–327 (NFREETETDL…AKLRAMMPWI (146 aa)) constitute a KARI C-terminal knotted domain. Positions 190, 194, 226, and 230 each coordinate Mg(2+). Ser-251 contacts substrate.

Belongs to the ketol-acid reductoisomerase family. The cofactor is Mg(2+).

The enzyme catalyses (2R)-2,3-dihydroxy-3-methylbutanoate + NADP(+) = (2S)-2-acetolactate + NADPH + H(+). It catalyses the reaction (2R,3R)-2,3-dihydroxy-3-methylpentanoate + NADP(+) = (S)-2-ethyl-2-hydroxy-3-oxobutanoate + NADPH + H(+). The protein operates within amino-acid biosynthesis; L-isoleucine biosynthesis; L-isoleucine from 2-oxobutanoate: step 2/4. It functions in the pathway amino-acid biosynthesis; L-valine biosynthesis; L-valine from pyruvate: step 2/4. Functionally, involved in the biosynthesis of branched-chain amino acids (BCAA). Catalyzes an alkyl-migration followed by a ketol-acid reduction of (S)-2-acetolactate (S2AL) to yield (R)-2,3-dihydroxy-isovalerate. In the isomerase reaction, S2AL is rearranged via a Mg-dependent methyl migration to produce 3-hydroxy-3-methyl-2-ketobutyrate (HMKB). In the reductase reaction, this 2-ketoacid undergoes a metal-dependent reduction by NADPH to yield (R)-2,3-dihydroxy-isovalerate. This is Ketol-acid reductoisomerase (NADP(+)) from Polynucleobacter necessarius subsp. necessarius (strain STIR1).